The sequence spans 262 residues: Abhydrolase domain-containing protein AKT2 (262 aa).

A Peroxisomal targeting signal type 1 motif is present at residues 260–262 (SKL).

This sequence belongs to the AB hydrolase superfamily. AKT2 hydrolase family.

It localises to the peroxisome. Its pathway is mycotoxin biosynthesis. Abhydrolase domain-containing protein; part of the gene clusters that mediate the biosynthesis of the host-selective toxins (HSTs) AK-toxins responsible for Japanese pear black spot disease by the Japanese pear pathotype. AK-toxins are esters of 9,10-epoxy 8-hydroxy 9-methyldecatrienoic acid (EDA). On cellular level, AK-toxins affect plasma membrane of susceptible cells and cause a sudden increase in loss of K(+) after a few minutes of toxin treatment. The acyl-CoA ligase AKT1, the hydrolase AKT2 and enoyl-CoA hydratase AKT3 are all involved in the biosynthesis of the AK-, AF- and ACT-toxin common 9,10-epoxy-8-hydroxy-9-methyl-decatrienoic acid (EDA) structural moiety. Part of the EDA biosynthesis occurs in the peroxisome since these 3 enzymes are localized in peroxisomes. The exact roles of the 3 enzymes, as well as of additional AK-toxin clusters enzymes, including AKT4, AKT6 and AKTS1, have still to be elucidated. The Cytochrome P450 monooxygenase AKT7 on the other side functions to limit production of EDA and AK-toxin, probably via the catalysis of a side reaction of EDA or its precursor. The protein is Abhydrolase domain-containing protein AKT2 of Alternaria alternata (Alternaria rot fungus).